Here is a 1077-residue protein sequence, read N- to C-terminus: Teashirt homolog 1-B (1077 aa).

Disordered regions lie at residues Met1–Tyr110 and Asn142–Asn179. Residues Thr26–Leu36 are compositionally biased toward acidic residues. The span at Thr56–Asn69 shows a compositional bias: polar residues. The segment covering Ser160–Asn179 has biased composition (low complexity). The segment at Phe248–His272 adopts a C2H2-type 1 zinc-finger fold. The span at Arg274–Lys286 shows a compositional bias: basic and acidic residues. Residues Arg274–Glu300 form a disordered region. Residues Leu309–His333 form a C2H2-type 2 zinc finger. A disordered region spans residues Ala362 to Pro394. A C2H2-type 3 zinc finger spans residues Leu418–His442. 2 disordered regions span residues Pro473–Pro530 and Gly849–Glu873. The span at His497–Glu529 shows a compositional bias: basic and acidic residues. Polar residues predominate over residues Pro853 to Ser862. Residues Arg885 to Gly955 constitute a DNA-binding region (homeobox). 2 C2H2-type zinc fingers span residues Phe970–His992 and Phe1037–His1060.

This sequence belongs to the teashirt C2H2-type zinc-finger protein family.

The protein resides in the nucleus. Functionally, probable transcriptional regulator involved in developmental processes. May act as a transcriptional repressor (Potential). Involved in two major neuronal regionalization processes: primary anteroposterior (AP) axis patterning of the CNS and segmentation of the cranial neuronal crest (CNS) development. This Xenopus laevis (African clawed frog) protein is Teashirt homolog 1-B (tshz1-b).